The sequence spans 88 residues: Small ribosomal subunit protein bS20 (88 aa).

A compositionally biased stretch (basic residues) spans 1–12; it reads MANHKSALKRAK. The interval 1–23 is disordered; it reads MANHKSALKRAKQNTIKQMRNRS.

The protein belongs to the bacterial ribosomal protein bS20 family.

Binds directly to 16S ribosomal RNA. In Desulfatibacillum aliphaticivorans, this protein is Small ribosomal subunit protein bS20.